A 481-amino-acid polypeptide reads, in one-letter code: Glucan endo-1,3-beta-glucosidase 8 (481 aa).

A signal peptide spans 1 to 33 (MSNLLALVVGFVIVIGHLGILVNGLGVNWGTMA). N99 and N110 each carry an N-linked (GlcNAc...) asparagine glycan. Catalysis depends on E119, which acts as the Proton donor. N-linked (GlcNAc...) asparagine glycosylation is found at N126 and N131. E265 acts as the Nucleophile in catalysis. A disulfide bridge links C367 with C428. N409 and N440 each carry an N-linked (GlcNAc...) asparagine glycan. S455 carries the GPI-anchor amidated serine lipid modification. A propeptide spans 456-481 (SASSFSCSSYSLVVLIVWFLLSGMMF) (removed in mature form).

The protein belongs to the glycosyl hydrolase 17 family. Contains two additional disulfide bonds.

The protein localises to the secreted. The protein resides in the cell wall. Its subcellular location is the cell membrane. The catalysed reaction is Hydrolysis of (1-&gt;3)-beta-D-glucosidic linkages in (1-&gt;3)-beta-D-glucans.. The chain is Glucan endo-1,3-beta-glucosidase 8 from Arabidopsis thaliana (Mouse-ear cress).